The following is a 186-amino-acid chain: ATP synthase subunit delta, chloroplastic (186 aa).

The protein belongs to the ATPase delta chain family. F-type ATPases have 2 components, F(1) - the catalytic core - and F(0) - the membrane proton channel. F(1) has five subunits: alpha(3), beta(3), gamma(1), delta(1), epsilon(1). CF(0) has four main subunits: a(1), b(1), b'(1) and c(10-14). The alpha and beta chains form an alternating ring which encloses part of the gamma chain. F(1) is attached to F(0) by a central stalk formed by the gamma and epsilon chains, while a peripheral stalk is formed by the delta, b and b' chains.

The protein localises to the plastid. Its subcellular location is the chloroplast thylakoid membrane. Its function is as follows. F(1)F(0) ATP synthase produces ATP from ADP in the presence of a proton or sodium gradient. F-type ATPases consist of two structural domains, F(1) containing the extramembraneous catalytic core and F(0) containing the membrane proton channel, linked together by a central stalk and a peripheral stalk. During catalysis, ATP synthesis in the catalytic domain of F(1) is coupled via a rotary mechanism of the central stalk subunits to proton translocation. In terms of biological role, this protein is part of the stalk that links CF(0) to CF(1). It either transmits conformational changes from CF(0) to CF(1) or is implicated in proton conduction. This is ATP synthase subunit delta, chloroplastic from Pyropia yezoensis (Susabi-nori).